Here is a 194-residue protein sequence, read N- to C-terminus: Imidazoleglycerol-phosphate dehydratase (194 aa).

It belongs to the imidazoleglycerol-phosphate dehydratase family.

The protein localises to the cytoplasm. It catalyses the reaction D-erythro-1-(imidazol-4-yl)glycerol 3-phosphate = 3-(imidazol-4-yl)-2-oxopropyl phosphate + H2O. It participates in amino-acid biosynthesis; L-histidine biosynthesis; L-histidine from 5-phospho-alpha-D-ribose 1-diphosphate: step 6/9. This is Imidazoleglycerol-phosphate dehydratase from Listeria monocytogenes serotype 4b (strain F2365).